The chain runs to 128 residues: Arginine decarboxylase proenzyme (128 aa).

S76 acts as the Schiff-base intermediate with substrate; via pyruvic acid in catalysis. Pyruvic acid (Ser); by autocatalysis is present on S76. The active-site Proton acceptor; for processing activity is the H81. Residue C96 is the Proton donor; for catalytic activity of the active site.

The protein belongs to the prokaryotic AdoMetDC family. Type 1 subfamily. Heterooctamer of four alpha and four beta chains arranged as a tetramer of alpha/beta heterodimers. Pyruvate serves as cofactor. In terms of processing, is synthesized initially as an inactive proenzyme. Formation of the active enzyme involves a self-maturation process in which the active site pyruvoyl group is generated from an internal serine residue via an autocatalytic post-translational modification. Two non-identical subunits are generated from the proenzyme in this reaction, and the pyruvate is formed at the N-terminus of the alpha chain, which is derived from the carboxyl end of the proenzyme. The post-translation cleavage follows an unusual pathway, termed non-hydrolytic serinolysis, in which the side chain hydroxyl group of the serine supplies its oxygen atom to form the C-terminus of the beta chain, while the remainder of the serine residue undergoes an oxidative deamination to produce ammonia and the pyruvoyl group blocking the N-terminus of the alpha chain.

The enzyme catalyses L-arginine + H(+) = agmatine + CO2. It participates in amine and polyamine biosynthesis; agmatine biosynthesis; agmatine from L-arginine: step 1/1. Functionally, specifically catalyzes the decarboxylation of L-arginine to agmatine. Has no S-adenosylmethionine decarboxylase (AdoMetDC) activity. The polypeptide is Arginine decarboxylase proenzyme (Sulfurisphaera tokodaii (strain DSM 16993 / JCM 10545 / NBRC 100140 / 7) (Sulfolobus tokodaii)).